The sequence spans 353 residues: MMVTSSSIPIGQILYHDPFFFVKREIFYFFLIFLLSFILLRIPMSFWEKNSNLILIISIFLLTIVLLIGKSVHGSYRWINIGILHIQPAEICKISSFFYISNYLSRKTNEVRNNFWGFLKPITIIIIQSVLLLAEPDLGTVIVLFLTTLSVLFLSGVKIKQFFIIIFFVTLIITALVLFEPYRIKRILSFWNPWKDPFGNGYQLTQSLIALGRGHFFGQGLGNSIQKLNYLPEAHSDFIFSIIGEELGYIGCFLILLMIFFISFRAMYIGQQSFEKKQVFSGFLACSIGLWFSFQTLINIGAVTGILPTKGLTLPLISYGGSSLIVNLMAICILLRIDFEIRLSEHQAFPKGI.

Helical transmembrane passes span 26–46, 53–73, 115–135, 137–157, 162–182, 242–262, 288–308, and 314–334; these read IFYF…PMSF, LILI…KSVH, FWGF…LLAE, DLGT…LSGV, FFII…FEPY, IIGE…IFFI, IGLW…GILP, and LPLI…ICIL.

This sequence belongs to the SEDS family. FtsW subfamily.

The protein localises to the cell inner membrane. It catalyses the reaction [GlcNAc-(1-&gt;4)-Mur2Ac(oyl-L-Ala-gamma-D-Glu-L-Lys-D-Ala-D-Ala)](n)-di-trans,octa-cis-undecaprenyl diphosphate + beta-D-GlcNAc-(1-&gt;4)-Mur2Ac(oyl-L-Ala-gamma-D-Glu-L-Lys-D-Ala-D-Ala)-di-trans,octa-cis-undecaprenyl diphosphate = [GlcNAc-(1-&gt;4)-Mur2Ac(oyl-L-Ala-gamma-D-Glu-L-Lys-D-Ala-D-Ala)](n+1)-di-trans,octa-cis-undecaprenyl diphosphate + di-trans,octa-cis-undecaprenyl diphosphate + H(+). It functions in the pathway cell wall biogenesis; peptidoglycan biosynthesis. Its function is as follows. Peptidoglycan polymerase that is essential for cell division. In Buchnera aphidicola subsp. Schizaphis graminum (strain Sg), this protein is Probable peptidoglycan glycosyltransferase FtsW.